The chain runs to 756 residues: Serine/threonine-protein kinase tousled-like 1-B (756 aa).

Low complexity-rich tracts occupy residues 1 to 12 (MSVQSNSNSSGS) and 23 to 34 (STGSPTPGSVSP). 2 disordered regions span residues 1–56 (MSVQ…LDPR) and 69–185 (VSGN…QNSS). The segment covering 45–56 (EGMDELHSLDPR) has biased composition (basic and acidic residues). The segment covering 72 to 85 (NTGGSTGSASGGPK) has biased composition (gly residues). Over residues 93–103 (SSHSFGSLGSS) the composition is skewed to low complexity. Over residues 104–120 (SDKESETPEKKHFESSR) the composition is skewed to basic and acidic residues. The stretch at 243 to 268 (DLRRQIDEQQKLLERFKERLNKCTTM) forms a coiled coil. The disordered stretch occupies residues 339-375 (KLLAKRKPSSTPSSQSPTPNESKQRKTKAVNGADNDP). A compositionally biased stretch (low complexity) spans 347 to 357 (SSTPSSQSPTP). Residues 397–435 (FKLRLGHLKKEEAEIQAELERLERVRNLHIRELKRINNE) adopt a coiled-coil conformation. One can recognise a Protein kinase domain in the interval 450 to 728 (YLLLHLLGRG…VHQLGSDSYL (279 aa)). ATP-binding positions include 456-464 (LGRGGFSEV) and lysine 479. Aspartate 580 acts as the Proton acceptor in catalysis. A disordered region spans residues 734–756 (RSNSSGNLQATPASPAPSGIISY). Residues 735-745 (SNSSGNLQATP) are compositionally biased toward polar residues.

The protein belongs to the protein kinase superfamily. Ser/Thr protein kinase family. The cofactor is Mg(2+).

Its subcellular location is the nucleus. The enzyme catalyses L-seryl-[protein] + ATP = O-phospho-L-seryl-[protein] + ADP + H(+). It carries out the reaction L-threonyl-[protein] + ATP = O-phospho-L-threonyl-[protein] + ADP + H(+). This is Serine/threonine-protein kinase tousled-like 1-B (tlk1b) from Danio rerio (Zebrafish).